Here is a 2667-residue protein sequence, read N- to C-terminus: eIF-2-alpha kinase activator GCN1 (2667 aa).

HEAT repeat units lie at residues 19 to 56 (DSFYSEIKELEKSIQSNKLSERKNTLTRINSIGKHELS), 95 to 132 (QWIFSLVQSLKQLFKDISSATNTSLVTDELKINIVKFT), 159 to 198 (SFSLVLLNYFIDQIQSNSDLTTLLFAAQELLYRELTLQHM), 293 to 330 (DLQSIILPPLSRHIKRDQDQVFKILIFILENLSSDFNV), 336 to 375 (LLKSMLLPMLLPVIQSTISIEENRKLLKKTFTLIIERSKD), 398 to 439 (SQKL…SISI), 466 to 503 (ELPEQTIKIITNSLKNDDDIIKGQVILSLSKSLGPEAN), and 794 to 832 (LLNEELVKLMVKALSYEPVLAITQQQWSIYHTLPTELFV). The tract at residues 842-879 (RNDRKVKPKTAEEQRDEESRKRIEEKKKIQSGELEKQE) is disordered. HEAT repeat units follow at residues 929–967 (PIIVALLQLMKHEITNHQFTQVFEKLICCVPSRFKLDRS), 985–1024 (LSEIQILGFIQKILTHIRESIAKEALSGFAFNYFWPIIKN), 1085–1122 (GVETSDIGELMEGIISKHVQVRSICLQAIEKIPSIYSP), 1199–1237 (HMIPEIVDNLFEIYEQNYPDEIRETPITSKFRISVATAL), 1290–1330 (GELL…HMDA), 1333–1370 (PKVSIVIDKLVDALSIPSESVQVGISKCIAQLIPSFKK), 1371–1407 (QGDRLIPMLLEKLKNSSGNYADRRGAAFGLAGSVKGL), 1412–1450 (LKNYSILDTLQSYIEDKKHPTSRQGALFAFECLCNTIGR), 1454–1491 (PYIIHILPKLLVCFGDNVSEVRDATADTAKAIMSQLSG), 1492–1529 (HGVKIVLPALLKALDDRSWRTKEGSIELLGAMAFCAPK), 1533–1570 (SCLPTIVPKLTYVLNDTHTKVQEAAKEALSHIGSVIRN), 1572–1608 (EIQIHVPLLLQTYDDPEIHSKELLENLLSTNYVHTID), 1610–1647 (ASLSLLLPILERTLKERSSELKKMSCQIVGNLCSLTEP), 1652–1689 (PYLNILMPVMKTVLLDPIPEVRAICARALGLLVRGMGE), 1691–1728 (NFSTLIPWLLETVKSDQGAVERSGAAQGLSEVLASLDI), 1729–1766 (SRFNSLINELLAMTNSPRPHVREGILSIFIFTPISLGD), 1770–1807 (PYLPKVLPQVLKGLADDSDPVREVCMRCGQSIVLQFAV), and 1809–1845 (GIEVIVPALEKVLFHENWRIRLSCVQLFGDLLFKLAG). A disordered region spans residues 1853 to 1875 (SNNSSYNAKDDDDDEPGSSGNDI). HEAT repeat units follow at residues 1882-1919 (ERLGRILSSLYMMRFDNNSSVRQKVLLIWKYIVSNTPK), 1923-1960 (EILPTLIEMIISSIGSNNVEKRQISAKTLGDIVSKLSD), 1962-1998 (ILPEILPILERGLRSELEETRQGVCIGLSEVISSAKT), 2002-2039 (PYLSSVVTCITKALCDPLIDVREAAAKAFDHLYHTFGS), 2040-2078 (KASNEILPQLIQLLDNSNNKDLAGYALDGLRQVILVRSS), 2080-2110 (VLPVLIPKLLSRPISTSNVTALSSLAADAGE), 2114-2152 (VHLSTIIPSLIESFTNPNTISNAKEIKEAAVSICKSIDE), 2154-2190 (GWDTLIGLLIEQTEIRLPNIRLGACELIGEFYNGNTM), 2193-2230 (EYPEELLLSLLSLFNDPDALVQQAANNALGFITKSLKK), and 2264-2301 (KGLASVLPVLISGLMYGTSDQREQATNTLRTVINHTSA). Positions 2265–2412 (GLASVLPVLI…ISQESKLRAL (148 aa)) are RWDBD region. The HEAT 37; degenerate repeat unit spans residues 2326–2348 (QVKSAILQTLSLLISKSPASMKI). An HEAT 38; degenerate repeat occupies 2349-2385 (FLHQLQPTFIKCLSDSHKNVRTNAASALGLLMTLSSS). 4 HEAT repeats span residues 2387–2421 (DQLVNSLITGISTADSISQESKLRALQSIFEKKPK), 2425–2462 (ATLDKAIATIVDFLYQPSDDLRSMVAQTIGASSKCFTS), 2508–2545 (PNMPTIIKIIQTDCRDEKGPIRESSAYLAEAILVASPL), and 2546–2583 (TYAKDLVPSICHLIGDQSSSVSISALNVIKRFCKSNQQ).

Belongs to the GCN1 family. Interacts with eif2ak4/gcn2; this interaction stimulates the eif2ak4/gcn2 kinase activity and is impaired by impact upon a variety of stress conditions, such as amino acid depletion, UV-C irradiation, proteasome inhibitor treatment and glucose deprivation. Interacts with impact; this prevents the interaction of gcn1 with eif2ak4/gcn2 and inhibits eif2ak4/gcn2 kinase activity.

The protein localises to the cytoplasm. Its function is as follows. Ribosome collision sensor that activates a translation quality control pathway when a ribosome has stalled during translation. Directly binds to the ribosome and acts as a sentinel for colliding ribosomes. Gcn1 also acts as a positive activator of the integrated stress response (ISR) by mediating activation of eif2ak4/gcn2 in response to amino acid starvation. Interaction with eif2ak4/gcn2 on translating ribosomes stimulates eif2ak4/gcn2 kinase activity, leading to phosphorylation of eukaryotic translation initiation factor 2 (eIF-2-alpha/eif2s1). EIF2S1/eIF-2-alpha phosphorylation converts EIF2S1/eIF-2-alpha into a global protein synthesis inhibitor, leading to a global attenuation of cap-dependent translation, and thus to a reduced overall utilization of amino acids, while concomitantly initiating the preferential translation of ISR-specific mRNAs, such as the transcriptional activator atf4, and hence allowing atf4-mediated reprogramming of amino acid biosynthetic gene expression to alleviate nutrient depletion. The polypeptide is eIF-2-alpha kinase activator GCN1 (Dictyostelium discoideum (Social amoeba)).